Here is a 784-residue protein sequence, read N- to C-terminus: LPS-assembly protein LptD (784 aa).

An N-terminal signal peptide occupies residues 1 to 24 (MKKRIPTLLATMIATALYSQQGLA). 2 cysteine pairs are disulfide-bonded: Cys31–Cys724 and Cys173–Cys725.

This sequence belongs to the LptD family. Component of the lipopolysaccharide transport and assembly complex. Interacts with LptE and LptA. In terms of processing, contains two intramolecular disulfide bonds.

It localises to the cell outer membrane. In terms of biological role, together with LptE, is involved in the assembly of lipopolysaccharide (LPS) at the surface of the outer membrane. This is LPS-assembly protein LptD from Shigella sonnei (strain Ss046).